The chain runs to 1001 residues: MNNAKVRIYDLSKELNLENRDILDICERLNVAAKSHSSTISESDAERIKAAAEKFTPQQPKKPRVASRPESKEDKSDPKQQKILAIHHKQEKSGGPSPARPTPPPRPKLQAPKAPTPPQPPVAKASAPKIQKQEEPAQEAPKSVAPPTQPLAPPPVPSLQSPPSKPAPPTPPAKKAAPAPRLAGPPGRTASPNKTAVPAPAKPKVNRPEIVSLKDNRGQARSPGDREEKVAIAAPEPPKPKVELRRPKPPRPEEDENLPELLEFPPLSRGKGVDGDNDADDGDLLSTEKPKPKLKRPTPPRLGKPDQWEDDEDEKANKAKAANKGKRRPKMDDDDDDLDIDGDNGPKPTLVSLSIARPPKPKSLAAKPSTPTVAKVKKPTLKSEAGSSAGGSSRSRGDRRDRKEVVQKPEVIMLDRSLTVRDLADLLKISETDIIKRLFLKGVAVQITQTLDEETARMVAESFEVAVETPERVAAAAKTTEMLDEADLDNLVRRPPVVTIMGHVDHGKTTLLDSIRKTKVAQGEAGGITQHIGAYHVEVEHNDKTEQIVFLDTPGHEAFTAMRARGAKVTDIAILVVAADDGVQPQTKEAISHAKAAGVPLIVAINKVDKPEANPDRIKQELSELGLLAEEWGGDTIMVPVSALNGDNLDGLLEMILLVSEVEELVANPNRQAKGTVIEANLDRTRGPVATLLIQNGTLRVGDAIVVGAVYGKIRAMIDDRGDKVEEASPSFAVEILGLGDVPAAGDEFEVFTNEKDARLQAEARAMEDRQTRLQQAMSSRKVTLSSISAQAQEGELKELNIILKADVQGSLGAILGSLEQLPQGEVQIRVLLASPGEVTETDVDLAAASGAIIIGFNTTLASGARQAADQEGVDIREYDIIYKLLDDIQGAMEGLLDPEEIESSLGTAEVRAVFPVGRGNIAGCYVQSGKIIRNRNLRVRRGDQVLFEGNIDSLKRIKEDVREVNAGYECGIGCSKFNDWKEGDIIEAYEMTMKRRTLAT.

Residues 34–404 (KSHSSTISES…SRGDRRDRKE (371 aa)) are disordered. The span at 67–80 (SRPESKEDKSDPKQ) shows a compositional bias: basic and acidic residues. Pro residues-rich tracts occupy residues 98–107 (PARPTPPPRP), 147–157 (PTQPLAPPPVP), and 163–172 (PSKPAPPTPP). Residues 173 to 190 (AKKAAPAPRLAGPPGRTA) show a composition bias toward low complexity. Composition is skewed to basic and acidic residues over residues 212 to 230 (SLKD…EEKV) and 238 to 252 (PKPK…PPRP). The segment covering 332–342 (DDDDDDLDIDG) has biased composition (acidic residues). Low complexity-rich tracts occupy residues 362 to 371 (KSLAAKPSTP) and 385 to 394 (AGSSAGGSSR). Positions 395–404 (SRGDRRDRKE) are enriched in basic and acidic residues. Positions 493–666 (RRPPVVTIMG…LLVSEVEELV (174 aa)) constitute a tr-type G domain. The tract at residues 502–509 (GHVDHGKT) is G1. 502–509 (GHVDHGKT) contributes to the GTP binding site. Positions 527 to 531 (GITQH) are G2. The interval 552-555 (DTPG) is G3. Residues 552–556 (DTPGH) and 606–609 (NKVD) contribute to the GTP site. Positions 606 to 609 (NKVD) are G4. Residues 642–644 (SAL) form a G5 region.

This sequence belongs to the TRAFAC class translation factor GTPase superfamily. Classic translation factor GTPase family. IF-2 subfamily.

Its subcellular location is the cytoplasm. Its function is as follows. One of the essential components for the initiation of protein synthesis. Protects formylmethionyl-tRNA from spontaneous hydrolysis and promotes its binding to the 30S ribosomal subunits. Also involved in the hydrolysis of GTP during the formation of the 70S ribosomal complex. The chain is Translation initiation factor IF-2 (infB) from Synechocystis sp. (strain ATCC 27184 / PCC 6803 / Kazusa).